The following is a 342-amino-acid chain: Dihydroorotate dehydrogenase (quinone) (342 aa).

FMN is bound by residues 61-65 and T85; that span reads AGLDK. K65 contacts substrate. Residue 110–114 participates in substrate binding; sequence NRMGF. N138 and N171 together coordinate FMN. N171 contacts substrate. The active-site Nucleophile is the S174. N176 is a substrate binding site. FMN-binding residues include K216 and T244. 245-246 provides a ligand contact to substrate; sequence NT. Residues G267, G296, and 317–318 contribute to the FMN site; that span reads YS.

Belongs to the dihydroorotate dehydrogenase family. Type 2 subfamily. As to quaternary structure, monomer. The cofactor is FMN.

It localises to the cell membrane. The enzyme catalyses (S)-dihydroorotate + a quinone = orotate + a quinol. It functions in the pathway pyrimidine metabolism; UMP biosynthesis via de novo pathway; orotate from (S)-dihydroorotate (quinone route): step 1/1. In terms of biological role, catalyzes the conversion of dihydroorotate to orotate with quinone as electron acceptor. This chain is Dihydroorotate dehydrogenase (quinone), found in Pseudomonas paraeruginosa (strain DSM 24068 / PA7) (Pseudomonas aeruginosa (strain PA7)).